Here is a 155-residue protein sequence, read N- to C-terminus: Small ribosomal subunit protein uS9 (155 aa).

It belongs to the universal ribosomal protein uS9 family.

The protein is Small ribosomal subunit protein uS9 of Rhizobium leguminosarum bv. trifolii (strain WSM2304).